The chain runs to 92 residues: Small ribosomal subunit protein uS19c (92 aa).

Belongs to the universal ribosomal protein uS19 family.

It is found in the plastid. The protein resides in the chloroplast. Protein S19 forms a complex with S13 that binds strongly to the 16S ribosomal RNA. This Cucumis sativus (Cucumber) protein is Small ribosomal subunit protein uS19c.